Consider the following 806-residue polypeptide: Facilitated trehalose transporter Tret1 (806 aa).

Disordered regions lie at residues 1–34 (MFGN…TTGT) and 48–138 (LNST…HKNQ). Topologically, residues 1-339 (MFGNEMDDTR…LEVYRPTTNP (339 aa)) are cytoplasmic. Residues 25–34 (GSLSTSTTGT) are compositionally biased toward low complexity. Residues 340–360 (IFIWTQVLAALSVSLGSMVVG) traverse the membrane as a helical segment. Over 361–389 (FSSAYTSPALVSMKDRNITSFEVTDQSGS) the chain is Extracellular. N-linked (GlcNAc...) asparagine glycosylation occurs at asparagine 377. A helical transmembrane segment spans residues 390–410 (WVGGIMPLAGLAGGILGGPLI). At 411-424 (EYLGRKNTILATAT) the chain is on the cytoplasmic side. The chain crosses the membrane as a helical span at residues 425–445 (PFIISWLLIACATHVAMVLVG). Topologically, residues 446 to 447 (RA) are extracellular. Residues 448–468 (LSGFSVGVASLSLPVYLGETV) traverse the membrane as a helical segment. The Cytoplasmic portion of the chain corresponds to 469-473 (QPEVR). The chain crosses the membrane as a helical span at residues 474-494 (GTLGLLPTAFGNIGILLCFVA). Residues 495–501 (GKYMDWS) are Extracellular-facing. The helical transmembrane segment at 502–522 (GLAFLGAALPIPFLLLMFLIP) threads the bilayer. Residues 523–585 (ETPRWYVSRG…DLMKKANLKP (63 aa)) are Cytoplasmic-facing. A helical membrane pass occupies residues 586 to 606 (LLISLGLMFFQQLSGINAVIF). The Extracellular segment spans residues 607 to 622 (YTVQIFQDAGSTIDEN). The chain crosses the membrane as a helical span at residues 623–643 (LCTIIVGVVNFIATFIATMLI). Residues 644-649 (DRLGRK) are Cytoplasmic-facing. Residues 650–670 (MLLYISDVAMIITLMTLGGFF) traverse the membrane as a helical segment. The Extracellular portion of the chain corresponds to 671 to 681 (YVKNSGQDVSQ). A helical membrane pass occupies residues 682–702 (VGWLPLAAFVIYVLGFSLGFG). Residues 703-723 (PIPWLMMGEILPGKIRGSAAS) are Cytoplasmic-facing. Residues 724-744 (VATAFNWSCTFIVTKTFADII) traverse the membrane as a helical segment. The Extracellular portion of the chain corresponds to 745-750 (NAIGTH). A helical membrane pass occupies residues 751 to 771 (GTFWMFGSICVIGLAFVIFYV). Topologically, residues 772 to 806 (PETQGKSLEDIERKMMGRVRRMSSVANIKPLSFNM) are cytoplasmic.

This sequence belongs to the major facilitator superfamily. Sugar transporter (TC 2.A.1.1) family. Trehalose transporter subfamily.

The protein resides in the cell membrane. Its function is as follows. High-capacity facilitative transporter for trehalose. Does not transport maltose, sucrose or lactose. Mediates the bidirectional transfer of trehalose. Responsible for the transport of trehalose synthesized in the fat body and the incorporation of trehalose into other tissues that require a carbon source, thereby regulating trehalose levels in the hemolymph. This Aedes aegypti (Yellowfever mosquito) protein is Facilitated trehalose transporter Tret1.